The primary structure comprises 433 residues: Ectonucleoside triphosphate diphosphohydrolase 5 (433 aa).

An N-terminal signal peptide occupies residues 1-24 (MATTWGAAFFMLVASCVCSTVFHR). The active-site Proton acceptor is Glu-172. N-linked (GlcNAc...) asparagine glycosylation is present at Asn-232. 2 disulfides stabilise this stretch: Cys-272/Cys-308 and Cys-368/Cys-382.

The protein belongs to the GDA1/CD39 NTPase family. As to quaternary structure, monomer; active form. Homodimer; disulfide-linked. Homodimers are enzymatically inactive. The cofactor is Ca(2+). Mg(2+) is required as a cofactor. In terms of processing, N-glycosylated; high-mannose type.

It is found in the endoplasmic reticulum. Its subcellular location is the secreted. It catalyses the reaction a ribonucleoside 5'-diphosphate + H2O = a ribonucleoside 5'-phosphate + phosphate + H(+). It carries out the reaction GDP + H2O = GMP + phosphate + H(+). The enzyme catalyses UDP + H2O = UMP + phosphate + H(+). The catalysed reaction is IDP + H2O = IMP + phosphate + H(+). It catalyses the reaction CDP + H2O = CMP + phosphate + H(+). It carries out the reaction ADP + H2O = AMP + phosphate + H(+). It functions in the pathway protein modification; protein glycosylation. Its function is as follows. Hydrolyzes nucleoside diphosphates with a preference for GDP, IDP and UDP compared to ADP and CDP. In the lumen of the endoplasmic reticulum, hydrolyzes UDP that acts as an end-product feedback inhibitor of the UDP-Glc:glycoprotein glucosyltransferases. UMP can be transported back by an UDP-sugar antiporter to the cytosol where it is consumed to regenerate UDP-glucose. Therefore, it positively regulates protein reglucosylation by clearing UDP from the ER lumen and by promoting the regeneration of UDP-glucose. Protein reglucosylation is essential to proper glycoprotein folding and quality control in the ER. This is Ectonucleoside triphosphate diphosphohydrolase 5 (ENTPD5) from Ailuropoda melanoleuca (Giant panda).